A 77-amino-acid chain; its full sequence is Large ribosomal subunit protein bL28 (77 aa).

This sequence belongs to the bacterial ribosomal protein bL28 family.

This chain is Large ribosomal subunit protein bL28, found in Variovorax paradoxus (strain S110).